The primary structure comprises 541 residues: Glutamyl-tRNA(Gln) amidotransferase subunit B, mitochondrial (541 aa).

The protein belongs to the GatB/GatE family. GatB subfamily. As to quaternary structure, subunit of the heterotrimeric GatFAB amidotransferase (AdT) complex, composed of A, B and F subunits.

It localises to the mitochondrion. It carries out the reaction L-glutamyl-tRNA(Gln) + L-glutamine + ATP + H2O = L-glutaminyl-tRNA(Gln) + L-glutamate + ADP + phosphate + H(+). In terms of biological role, allows the formation of correctly charged Gln-tRNA(Gln) through the transamidation of misacylated Glu-tRNA(Gln) in the mitochondria. The reaction takes place in the presence of glutamine and ATP through an activated gamma-phospho-Glu-tRNA(Gln). The protein is Glutamyl-tRNA(Gln) amidotransferase subunit B, mitochondrial of Saccharomyces cerevisiae (strain YJM789) (Baker's yeast).